Consider the following 491-residue polypeptide: Proline--tRNA ligase (491 aa).

Belongs to the class-II aminoacyl-tRNA synthetase family. ProS type 3 subfamily. As to quaternary structure, homodimer.

Its subcellular location is the cytoplasm. It carries out the reaction tRNA(Pro) + L-proline + ATP = L-prolyl-tRNA(Pro) + AMP + diphosphate. Functionally, catalyzes the attachment of proline to tRNA(Pro) in a two-step reaction: proline is first activated by ATP to form Pro-AMP and then transferred to the acceptor end of tRNA(Pro). This chain is Proline--tRNA ligase, found in Cytophaga hutchinsonii (strain ATCC 33406 / DSM 1761 / CIP 103989 / NBRC 15051 / NCIMB 9469 / D465).